The chain runs to 513 residues: Ankyrin repeat-containing protein YIL001W (513 aa).

2 ANK repeats span residues 8–37 (KNFEELCYSCRTGDMDNVDRLISTGVNVNS) and 41–70 (FDNSPLFLASLCGHEAVVKLLLQRGAVCDR). BTB domains are found at residues 122–179 (RDIT…KFLY) and 274–360 (PDVQ…DIPW).

This chain is Ankyrin repeat-containing protein YIL001W, found in Saccharomyces cerevisiae (strain ATCC 204508 / S288c) (Baker's yeast).